A 458-amino-acid chain; its full sequence is Kelch repeat and BTB domain-containing protein 13 (458 aa).

Residues 7–74 (VPVQVWVDGQ…LRGERPALAA (68 aa)) form the BTB domain. Kelch repeat units follow at residues 159 to 209 (AVST…TLGN), 210 to 258 (KLYI…GFEG), 259 to 305 (RLYA…QARG), 307 to 350 (LFVC…VAHR), and 352 to 400 (SLYV…VVRG).

Component of the BCR(KBTBD13) E3 ubiquitin ligase complex, at least composed of CUL3 and KBTBD13 and RBX1. Interacts with CUL3. In terms of processing, autoubiquitinated. As to expression, expressed in skeletal muscle, heart and lung.

The protein localises to the cytoplasm. Its pathway is protein modification; protein ubiquitination. In terms of biological role, substrate-specific adapter of a BCR (BTB-CUL3-RBX1) E3 ubiquitin ligase complex. The polypeptide is Kelch repeat and BTB domain-containing protein 13 (Kbtbd13) (Mus musculus (Mouse)).